Consider the following 271-residue polypeptide: Formamidopyrimidine-DNA glycosylase (271 aa).

Pro2 (schiff-base intermediate with DNA) is an active-site residue. Glu3 acts as the Proton donor in catalysis. The active-site Proton donor; for beta-elimination activity is the Lys58. DNA-binding residues include His92, Arg111, and Lys152. An FPG-type zinc finger spans residues Tyr237–Asn271. Residue Arg261 is the Proton donor; for delta-elimination activity of the active site.

The protein belongs to the FPG family. Monomer. Zn(2+) is required as a cofactor.

The catalysed reaction is Hydrolysis of DNA containing ring-opened 7-methylguanine residues, releasing 2,6-diamino-4-hydroxy-5-(N-methyl)formamidopyrimidine.. It carries out the reaction 2'-deoxyribonucleotide-(2'-deoxyribose 5'-phosphate)-2'-deoxyribonucleotide-DNA = a 3'-end 2'-deoxyribonucleotide-(2,3-dehydro-2,3-deoxyribose 5'-phosphate)-DNA + a 5'-end 5'-phospho-2'-deoxyribonucleoside-DNA + H(+). Its function is as follows. Involved in base excision repair of DNA damaged by oxidation or by mutagenic agents. Acts as a DNA glycosylase that recognizes and removes damaged bases. Has a preference for oxidized purines, such as 7,8-dihydro-8-oxoguanine (8-oxoG). Has AP (apurinic/apyrimidinic) lyase activity and introduces nicks in the DNA strand. Cleaves the DNA backbone by beta-delta elimination to generate a single-strand break at the site of the removed base with both 3'- and 5'-phosphates. The chain is Formamidopyrimidine-DNA glycosylase from Wolbachia sp. subsp. Brugia malayi (strain TRS).